The following is a 410-amino-acid chain: Arginine deiminase (410 aa).

Catalysis depends on Cys400, which acts as the Amidino-cysteine intermediate.

It belongs to the arginine deiminase family.

It localises to the cytoplasm. It catalyses the reaction L-arginine + H2O = L-citrulline + NH4(+). It functions in the pathway amino-acid degradation; L-arginine degradation via ADI pathway; carbamoyl phosphate from L-arginine: step 1/2. The chain is Arginine deiminase from Streptococcus agalactiae serotype Ia (strain ATCC 27591 / A909 / CDC SS700).